The chain runs to 446 residues: MTDQTATPRSFSASVPLKGRIAIPGDKSISHRSLMLSALAVGESRVAGLLEGHDVLATAAAMRAMGADIARRDDGEWRIHGVGVGGLLQPRGALDMGNSGTSTRLLMGLVASHPITATFVGDASLSGRPMGRVIDPLTQMGADISASPGARGAKTLPLMVRGLAPAIPLSYRLPMASAQVKSAILLAGLNTPGVTEVIEPVPTRDHSERMLGAFGADLTVDIDAGGTRHIRIRGEADLKPQAIIVPGDPSSAAFFIVAALIVPGSDVTIANVGLNPTRAGLVEVLKAMGGDIELLDRREIGGEPVADLRVRHSVLKGIEVDPAVAPSMIDEFPVLFVAATLAEGRTVTTGLDELRVKESDRLAVMATGLKAIGARVEESQDGLVIDGTGGDPLAGGATIAGHLDHRICMSFAIAGLVSKAPVTVDDIAPVATSFPNFEALLAGLQQ.

Residues lysine 27, serine 28, and arginine 32 each coordinate 3-phosphoshikimate. Lysine 27 is a phosphoenolpyruvate binding site. Phosphoenolpyruvate-binding residues include glycine 100 and arginine 128. 3-phosphoshikimate-binding residues include serine 177, glutamine 179, aspartate 330, and lysine 357. Glutamine 179 is a phosphoenolpyruvate binding site. Residue aspartate 330 is the Proton acceptor of the active site. Phosphoenolpyruvate-binding residues include arginine 361 and arginine 406.

This sequence belongs to the EPSP synthase family. In terms of assembly, monomer.

Its subcellular location is the cytoplasm. The enzyme catalyses 3-phosphoshikimate + phosphoenolpyruvate = 5-O-(1-carboxyvinyl)-3-phosphoshikimate + phosphate. Its pathway is metabolic intermediate biosynthesis; chorismate biosynthesis; chorismate from D-erythrose 4-phosphate and phosphoenolpyruvate: step 6/7. Catalyzes the transfer of the enolpyruvyl moiety of phosphoenolpyruvate (PEP) to the 5-hydroxyl of shikimate-3-phosphate (S3P) to produce enolpyruvyl shikimate-3-phosphate and inorganic phosphate. In Sphingopyxis alaskensis (strain DSM 13593 / LMG 18877 / RB2256) (Sphingomonas alaskensis), this protein is 3-phosphoshikimate 1-carboxyvinyltransferase.